A 73-amino-acid polypeptide reads, in one-letter code: Translation initiation factor IF-1 (73 aa).

The region spanning 1 to 73 (MAKKDGAIEV…SRGRIVYRYK (73 aa)) is the S1-like domain.

This sequence belongs to the IF-1 family. As to quaternary structure, component of the 30S ribosomal translation pre-initiation complex which assembles on the 30S ribosome in the order IF-2 and IF-3, IF-1 and N-formylmethionyl-tRNA(fMet); mRNA recruitment can occur at any time during PIC assembly.

Its subcellular location is the cytoplasm. Its function is as follows. One of the essential components for the initiation of protein synthesis. Stabilizes the binding of IF-2 and IF-3 on the 30S subunit to which N-formylmethionyl-tRNA(fMet) subsequently binds. Helps modulate mRNA selection, yielding the 30S pre-initiation complex (PIC). Upon addition of the 50S ribosomal subunit IF-1, IF-2 and IF-3 are released leaving the mature 70S translation initiation complex. This chain is Translation initiation factor IF-1, found in Mycolicibacterium smegmatis (strain ATCC 700084 / mc(2)155) (Mycobacterium smegmatis).